The primary structure comprises 766 residues: Disabled homolog 2 (766 aa).

Residues 1–16 show a composition bias toward polar residues; sequence MSNEVETSTTNGQPDQ. The tract at residues 1 to 36 is disordered; that stretch reads MSNEVETSTTNGQPDQQAAPKAPSKKEKKKGSEKTD. N-acetylserine is present on Ser-2. Ser-2 is modified (phosphoserine). The 152-residue stretch at 45 to 196 folds into the PID domain; that stretch reads GDGVKYKAKL…KAEENGSEAL (152 aa). At Tyr-170 the chain carries Phosphotyrosine. Position 193 is a phosphoserine (Ser-193). The tract at residues 230–447 is required for localization to clathrin-coated pits; it reads ESKDILLVDL…KPGRGRRTAK (218 aa). Disordered stretches follow at residues 284–482, 596–630, 659–683, and 699–766; these read LNFF…NFLD, PPPT…LKDI, RQPP…FSSY, and DFDA…NPFA. Short sequence motifs (DPF) lie at residues 293 to 295 and 298 to 300; these read DPF. Composition is skewed to polar residues over residues 303-334 and 367-381; these read PDQS…QSKG and PSSQ…QNGV. Position 323 is a phosphoserine (Ser-323). Phosphoserine; in mitosis occurs at positions 326 and 328. The residue at position 401 (Ser-401) is a Phosphoserine. Residues 467 to 480 show a composition bias toward polar residues; sequence MSPTGQPAVPQSNF. The span at 600–612 shows a compositional bias: low complexity; it reads MSTQSSPQPMMSS. The sufficient for interaction with GRB2 stretch occupies residues 600–730; the sequence is MSTQSSPQPM…VLLGTKSADN (131 aa). The tract at residues 617 to 625 is required for interaction with CSK; the sequence is PPQPPPRNG. Residues 647–766 form a required for interaction with MYO6 region; the sequence is KEVKEMFKDF…HRSPFGNPFA (120 aa). Residues 661-669 are required for interaction with GRB2 and CSK; that stretch reads PPLVPSRKG. The residue at position 671 (Thr-671) is a Phosphothreonine. A compositionally biased stretch (polar residues) spans 673–683; sequence PSGTSSAFSSY. Residues 707-723 form a sufficient for interaction with SH3KBP1 SH3 domain region; sequence NKINEPPKPAPRQGVLL. Ser-727 and Ser-759 each carry phosphoserine. The span at 727–753 shows a compositional bias: polar residues; that stretch reads SADNSLENPFSKGFSSSNPSVVSQPAS.

Interacts (via NPXY motif) with DAB2 (via PID domain). Can interact (via PID domain) with LDLR, APP, APLP1 and APLP2, and weakly with INPP5D (via NPXY motifs); the interaction is impaired by tyrosine phosphorylation of the respective NPXY motifs. Can weakly interact (via PID domain) with LRP1 (via NPXY motif); the interaction is enhanced by tyrosine phosphorylation of the NPXY motif. Interacts with LRP2 (via NPXY motif); the interaction is not affected by tyrosine phosphorylation of the NPXY motif. Interacts with clathrin; in vitro can assemble clathrin triskelia into polyhedral coats. Interacts with AP2A2, ITGB1, ITGB3, ITGB5, PIAS2, DAB2IP, NOSTRIN, FCHO1, DVL3 and EPS15L1. Interacts with SH3KBP1 (via SH3 domains). Interacts with GRB2; competes with SOS1 for binding to GRB2 and the interaction is enhanced by EGF and NT-3 stimulation. Isoform p96 interacts with EPS15 and ITSN1; isoform p67 does not interact with EPS15 and only weakly interacts with ITSN1. Interacts with MAP3K7; the interaction is induced by TGF-beta stimulation and may mediate TGF-beta stimulated JNK activation. Interacts with AXIN1 and PPP1CA; the interactions are mutually exclusive. Interacts with the globular tail of MYO6. Interacts (via DPF motifs) with FCHO2; the interaction is direct and required for DAB2-mediated LDLR endocytosis. Interacts with LRP6; the interaction involves LRP6 phosphorylation by CK2 and sequesters LRP6 towards clathrin-mediated endocytosis. Associates with the TGF-beta receptor complex. Interacts with SMAD2 and SMAD3; the interactions are enhanced upon TGF-beta stimulation. Interacts with GRB2; the interaction is enhanced by EGF and NT-3 stimulation. Interacts with SRC; the interaction is enhanced by EGF stimulation. In terms of processing, phosphorylated on serine residues in response to mitogenic growth-factor stimulation. Phosphorylation during mitosis is leading to membrane displacement. In terms of tissue distribution, isoform p96 and isoform p67 are expressed in adult kidney and fibroblasts with isoform p96 being the predominant form. Isoform p67 is the predominant isoform expressed in embryonic visceral endoderm.

The protein localises to the cytoplasmic vesicle. The protein resides in the clathrin-coated vesicle membrane. Its subcellular location is the membrane. It is found in the clathrin-coated pit. It localises to the cytoplasm. The protein localises to the nucleus. Its function is as follows. Adapter protein that functions as a clathrin-associated sorting protein (CLASP) required for clathrin-mediated endocytosis of selected cargo proteins. Can bind and assemble clathrin, and binds simultaneously to phosphatidylinositol 4,5-bisphosphate (PtdIns(4,5)P2) and cargos containing non-phosphorylated NPXY internalization motifs, such as the LDL receptor, to recruit them to clathrin-coated pits. Can function in clathrin-mediated endocytosis independently of the AP-2 complex. Involved in endocytosis of integrin beta-1; this function seems to redundant with the AP-2 complex and seems to require DAB2 binding to endocytosis accessory EH domain-containing proteins such as EPS15, EPS15L1 and ITSN1. Involved in endocytosis of cystic fibrosis transmembrane conductance regulator/CFTR. Isoform p96 is involved in endocytosis of megalin/LRP2 lipoprotein receptor during embryonal development. Required for recycling of the TGF-beta receptor. Isoform p67 is not involved in LDL receptor endocytosis. Involved in CFTR trafficking to the late endosome. Involved in several receptor-mediated signaling pathways. Involved in TGF-beta receptor signaling and facilitates phosphorylation of the signal transducer SMAD2. Mediates TFG-beta-stimulated JNK activation. May inhibit the canoniocal Wnt/beta-catenin signaling pathway by stabilizing the beta-catenin destruction complex through a competing association with axin preventing its dephosphorylation through protein phosphatase 1 (PP1). Sequesters LRP6 towards clathrin-mediated endocytosis, leading to inhibition of Wnt/beta-catenin signaling. May activate non-canonical Wnt signaling. In cell surface growth factor/Ras signaling pathways proposed to inhibit ERK activation by interrupting the binding of GRB2 to SOS1 and to inhibit SRC by preventing its activating phosphorylation at 'Tyr-419'. Proposed to be involved in modulation of androgen receptor (AR) signaling mediated by SRC activation; seems to compete with AR for interaction with SRC. Plays a role in the CSF-1 signal transduction pathway. Plays a role in cellular differentiation. Involved in cell positioning and formation of visceral endoderm (VE) during embryogenesis and proposed to be required in the VE to respond to Nodal signaling coming from the epiblast. Required for the epithelial to mesenchymal transition, a process necessary for proper embryonic development. May be involved in myeloid cell differentiation and can induce macrophage adhesion and spreading. Isoform p67 may be involved in transcriptional regulation. May act as a tumor suppressor. This is Disabled homolog 2 (Dab2) from Mus musculus (Mouse).